A 1947-amino-acid chain; its full sequence is Sodium channel protein type 3 subunit alpha (1947 aa).

The Cytoplasmic portion of the chain corresponds to 1 to 128 (MAQALLVPPG…KIAIKILVHS (128 aa)). The segment at 28-60 (RAAEEKAKKPKKEQDIDDENKPKPNSDLEAGKN) is disordered. Basic and acidic residues predominate over residues 46 to 57 (ENKPKPNSDLEA). An I repeat occupies 110–455 (ILTPLNPVRK…QQMLEQLKKQ (346 aa)). Residues 129–146 (LFSMLIMCTILTNCVFMT) traverse the membrane as a helical segment. Residues 147–152 (LSNPPD) are Extracellular-facing. A helical membrane pass occupies residues 153–174 (WTKNVEYTFTGIYTFESLIKIL). Over 175–188 (ARGFCLEDFTFLRD) the chain is Cytoplasmic. The helical transmembrane segment at 189–206 (PWNWLDFSVIVMAYVTEF) threads the bilayer. Topologically, residues 207–213 (VDLGNVS) are extracellular. Asparagine 211 carries an N-linked (GlcNAc...) asparagine glycan. The chain crosses the membrane as a helical span at residues 214–235 (ALRTFRVLRALKTISVIPGLKT). The Cytoplasmic portion of the chain corresponds to 236 to 249 (IVGALIQSVKKLSD). A helical membrane pass occupies residues 250 to 269 (VMILTVFCLSVFALIGLQLF). The Extracellular segment spans residues 270 to 369 (MGNLRNKCLQ…NYGYTSFDTF (100 aa)). N-linked (GlcNAc...) asparagine glycosylation is found at asparagine 290, asparagine 296, asparagine 302, asparagine 307, and asparagine 339. Positions 370 to 386 (SWAFLSLFRLMTQDYWE) form an intramembrane region, pore-forming. Residues 387-397 (NLYQLTLRAAG) are Extracellular-facing. The chain crosses the membrane as a helical span at residues 398 to 424 (KTYMIFFVLVIFLGSFYLVNLILAVVA). Residues 425-712 (MAYEEQNQAT…LVNLIVMDPF (288 aa)) are Cytoplasmic-facing. A phosphoserine mark is found at serine 484, serine 485, and serine 486. Disordered regions lie at residues 493–529 (SKSA…SESE) and 587–632 (VGSE…ETEV). Over residues 500–509 (RNRRKKRRQR) the composition is skewed to basic residues. 2 stretches are compositionally biased toward basic and acidic residues: residues 510–529 (EHLE…SESE) and 596–622 (DEHS…ERRN). The stretch at 693–965 (CCDSWLKVKH…QIAVGRMQKG (273 aa)) is one II repeat. A helical membrane pass occupies residues 713 to 730 (VDLAITICIVLNTLFMAM). The Extracellular portion of the chain corresponds to 731–738 (EHYPMTEQ). A helical transmembrane segment spans residues 739 to 763 (FSSVLTVGNLVFTGIFTAEMVLKII). Residues 764-773 (AMDPYYYFQE) lie on the Cytoplasmic side of the membrane. Residues 774-793 (GWNIFDGIIVSLSLMELGLA) traverse the membrane as a helical segment. The Extracellular segment spans residues 794 to 797 (NVEG). The chain crosses the membrane as a helical span at residues 798-816 (LSVLRSFRLLRVFKLAKSW). Residues 817–834 (PTLNMLIKIIGNSVGALG) lie on the Cytoplasmic side of the membrane. The chain crosses the membrane as a helical span at residues 835 to 855 (NLTLVLAIIVFIFAVVGMQLF). At 856–880 (GKSYKECVCKINEDCKLPRWHMNDF) the chain is on the extracellular side. A disulfide bridge connects residues cysteine 864 and cysteine 870. The pore-forming intramembrane region spans 881 to 896 (FHSFLIVFRVLCGEWI). The Extracellular portion of the chain corresponds to 897–907 (ETMWDCMEVAG). Cysteine 902 and cysteine 911 form a disulfide bridge. A helical transmembrane segment spans residues 908–934 (QTMCLIVFMLVMVIGNLVVLNLFLALL). Over 935 to 1157 (LSSFSSDNLA…RKTCYSIVEH (223 aa)) the chain is Cytoplasmic. The segment at 1070–1113 (EEFSSESELEESKEKLNATSSSEGSTVDVAPPREGEQAEIEPEE) is disordered. An III repeat occupies 1140–1451 (KGKIWWNLRK…KKYYNAMKKL (312 aa)). A helical membrane pass occupies residues 1158–1178 (NWFETFIVFMILLSSGALAFE). Over 1179–1190 (DIYIEQRKTIKT) the chain is Extracellular. A helical membrane pass occupies residues 1191-1212 (MLEYADKVFTYIFILEMLLKWV). Topologically, residues 1213–1218 (AYGFQT) are cytoplasmic. The chain crosses the membrane as a helical span at residues 1219–1244 (YFTNAWCWLDFLIVDVSLVSLVANAL). Over 1245 to 1253 (GYSELGAIK) the chain is Extracellular. The helical transmembrane segment at 1254-1272 (SLRTLRALRPLRALSRFEG) threads the bilayer. Topologically, residues 1273–1285 (MRVVVNALVGAIP) are cytoplasmic. A helical membrane pass occupies residues 1286-1308 (SIMNVLLVCLIFWLIFSIMGVNL). At 1309–1354 (FAGKFYHCVNMTTGSMFDMSEVNNFSDCQALGKQARWKNVKVNFDN) the chain is on the extracellular side. A disulfide bond links cysteine 1316 and cysteine 1336. N-linked (GlcNAc...) asparagine glycosylation is found at asparagine 1318 and asparagine 1332. Residues 1355-1371 (VGAGYLALLQVATFKGW) constitute an intramembrane region (pore-forming). Residues 1372–1394 (MDIMYAAVDSRDVKLQPVYEENL) lie on the Extracellular side of the membrane. Residues 1395-1420 (YMYLYFVIFIIFGSFFTLNLFIGVII) form a helical membrane-spanning segment. Residues 1421–1478 (DNFNQQKKKFGGQDIFMTEEQKKYYNAMKKLGSKKPQKPIPRPANKFQGMVFDFVTRQ) lie on the Cytoplasmic side of the membrane. A Phosphoserine modification is found at serine 1453. An IV repeat occupies 1460–1758 (IPRPANKFQG…WEKFDPDATQ (299 aa)). The helical transmembrane segment at 1479–1497 (VFDISIMILICLNMVTMMV) threads the bilayer. Topologically, residues 1498–1505 (ETDDQSKY) are extracellular. Residues 1506-1529 (MTLVLSRINLVFIVLFTGEFLLKL) form a helical membrane-spanning segment. Residues 1530–1539 (ISLRYYYFTI) lie on the Cytoplasmic side of the membrane. Residues 1540–1557 (GWNIFDFVVVILSIVGMF) traverse the membrane as a helical segment. At 1558 to 1569 (LAELIEKYFVSP) the chain is on the extracellular side. A helical transmembrane segment spans residues 1570-1592 (TLFRVIRLARIGRILRLIKGAKG). The Cytoplasmic portion of the chain corresponds to 1593–1605 (IRTLLFALMMSLP). Residues 1606 to 1629 (ALFNIGLLLFLVMFIYAIFGMSNF) traverse the membrane as a helical segment. Topologically, residues 1630–1651 (AYVKKEAGIDDMFNFETFGNSM) are extracellular. Residues 1652-1664 (ICLFQITTSAGWD) constitute an intramembrane region (pore-forming). Over 1665–1696 (GLLAPILNSAPPDCDPDAIHPGSSVKGDCGNP) the chain is Extracellular. A helical membrane pass occupies residues 1697 to 1722 (SVGIFFFVSYIIISFLVVVNMYIAVI). Residues 1723–1947 (LENFSVATEE…PEKESKGKEV (225 aa)) lie on the Cytoplasmic side of the membrane. The IQ domain maps to 1852 to 1881 (EEVSAAIIQRNYRCYLLKQRLKNISNTYDK). A disordered region spans residues 1901-1947 (LNGNSTPEKTDGSSSTTSPPSYDSVTKPDKEKFEKDKPEKESKGKEV). The segment covering 1926–1947 (TKPDKEKFEKDKPEKESKGKEV) has biased composition (basic and acidic residues).

It belongs to the sodium channel (TC 1.A.1.10) family. Nav1.3/SCN3A subfamily. Heterooligomer of an alpha subunit, SCN3A, and 1 to 3 regulatory beta subunits including SCN1B and SCN2B; disulfide-linked with some beta subunits like SCN2B. Interacts with NEDD4L; could regulate expression of SCN3A at the plasma membrane through ubiquitination-regulated endocytosis. Post-translationally, may be ubiquitinated by NEDD4L; which would promote its endocytosis. Phosphorylation at Ser-1453 in a highly conserved cytoplasmic loop slows inactivation of the channel and reduces peak sodium currents. As to expression, expressed in enterochromaffin cells in both colon and small bowel (at protein level). Expressed in pancreatic alpha and beta cells.

The protein resides in the cell membrane. It localises to the basal cell membrane. The catalysed reaction is Na(+)(in) = Na(+)(out). In terms of biological role, pore-forming subunit of Nav1.3, a voltage-gated sodium (Nav) channel that directly mediates the depolarizing phase of action potentials in excitable membranes. Navs, also called VGSCs (voltage-gated sodium channels) or VDSCs (voltage-dependent sodium channels), operate by switching between closed and open conformations depending on the voltage difference across the membrane. In the open conformation they allow Na(+) ions to selectively pass through the pore, along their electrochemical gradient. The influx of Na+ ions provokes membrane depolarization, initiating the propagation of electrical signals throughout cells and tissues. In some secretory cell types, it also participates in cell excitability through membrane depolarization and regulates cells responsiveness to stimuli triggering secretion. For instance, it controls the release of serotonin/5-hydroxytryptamine by enterochromaffin cells and is required for both glucagon- and glucose-induced insulin secretion in pancreatic endocrine cells. The chain is Sodium channel protein type 3 subunit alpha from Mus musculus (Mouse).